The primary structure comprises 662 residues: Zinc finger protein 17 (662 aa).

Positions 8–101 (MVFEDVAIHF…LLKDILHLAE (94 aa)) constitute a KRAB domain. 16 consecutive C2H2-type zinc fingers follow at residues 190 to 212 (YSCTQCGKDFCHQHTLFEHQKIH), 218 to 240 (YECSECGKLFRYNSDLIKHQRNH), 246 to 268 (YKCSECGKAFSLKYNVVQHQKIH), 274 to 296 (YECSECGKAFLRKSHLLQHQRIH), 302 to 324 (YVCSECGKAFLTQAHLVGHQKIH), 358 to 380 (FYCCECGKFFMDSCTLIIHQRVH), 386 to 408 (YECNECGKFFRYRSTLIRHQKVH), 414 to 436 (YECSECGKFFMDTSTLIIHQRVH), 442 to 464 (YECNKCGKFFRYCFTLNRHQRVH), 470 to 492 (YECSECGKFFVDSCTLKSHQRVH), 498 to 520 (FECSICGKSFRCRSTLDTHQRIH), 526 to 548 (YECSECGKFFRHNSNHIRHRRNH), 554 to 576 (FECTECGRVFSQNSHLIRHQKVH), 582 to 604 (YKCSKCGKFFMDSSTLISHERVH), 610 to 632 (YECSECGKVFRYNSSLIKHRRIH), and 638 to 660 (YQCSECGRVFNQNSHLIQHQKVH).

Belongs to the krueppel C2H2-type zinc-finger protein family.

Its subcellular location is the nucleus. May be involved in transcriptional regulation. In Homo sapiens (Human), this protein is Zinc finger protein 17 (ZNF17).